The primary structure comprises 314 residues: Protein nutcracker (314 aa).

Positions 1–62 are disordered; the sequence is MSDTKSEIEG…PRLIQEKSTQ (62 aa). A compositionally biased stretch (low complexity) spans 21 to 34; the sequence is QQQQQPQQQQNEQQ. The tract at residues 257 to 314 is required for interaction with skpA and Cul1, but not with PI31; it reads MQMEMKLQPSLLGLPDELYFEIFRYLDKSQLNVVARVNRHLHFYSKEVERKRLKGGRS. In terms of domain architecture, F-box spans 264-309; the sequence is QPSLLGLPDELYFEIFRYLDKSQLNVVARVNRHLHFYSKEVERKRL.

As to quaternary structure, component of an SCF (SKP1-CUL1-F-box protein) E3 ubiquitin-protein ligase complex, at least composed of ntc, skpA and Cul1. Interacts (via F-box domain) with skpA and Cul1. Interacts with Prosalpha7 and PI31. Interacts with Bruce. In terms of tissue distribution, expressed in testis (at protein level).

It localises to the cytoplasm. In terms of biological role, functions together with PI31 to control non-apoptotic caspase activation during sperm individualization. Positively regulates PI31 stability. This Drosophila melanogaster (Fruit fly) protein is Protein nutcracker.